We begin with the raw amino-acid sequence, 64 residues long: Translation machinery-associated protein 7B (64 aa).

The segment at 1–38 (MSSHEGGKKKALKQPKKQAKEMDEEEKAFKQKQKEEQK) is disordered. Residues 27-38 (KAFKQKQKEEQK) are compositionally biased toward basic and acidic residues.

Belongs to the TMA7 family.

The polypeptide is Translation machinery-associated protein 7B (Homo sapiens (Human)).